The following is a 374-amino-acid chain: 2-aminoethylphosphonate--pyruvate transaminase 1 (374 aa).

Residue K195 is modified to N6-(pyridoxal phosphate)lysine.

The protein belongs to the class-V pyridoxal-phosphate-dependent aminotransferase family. PhnW subfamily. Homodimer. Requires pyridoxal 5'-phosphate as cofactor.

The enzyme catalyses (2-aminoethyl)phosphonate + pyruvate = phosphonoacetaldehyde + L-alanine. Its function is as follows. Involved in phosphonate degradation. In Polaromonas sp. (strain JS666 / ATCC BAA-500), this protein is 2-aminoethylphosphonate--pyruvate transaminase 1.